The primary structure comprises 1382 residues: Hepatocyte growth factor receptor (1382 aa).

The signal sequence occupies residues 1–24 (MKAPAVLAPGILVLLFTLVQKSYG). Residues 25-933 (ECREALVKSE…VIVQPDQNFT (909 aa)) lie on the Extracellular side of the membrane. Residues 27–516 (REALVKSEMN…TGKKITKIPL (490 aa)) form the Sema domain. The N-linked (GlcNAc...) asparagine glycan is linked to asparagine 45. Intrachain disulfides connect cysteine 95-cysteine 101, cysteine 98-cysteine 160, cysteine 133-cysteine 141, and cysteine 173-cysteine 176. An N-linked (GlcNAc...) asparagine glycan is attached at asparagine 106. N-linked (GlcNAc...) asparagine glycosylation is found at asparagine 203 and asparagine 359. Cystine bridges form between cysteine 299–cysteine 364 and cysteine 386–cysteine 398. Residues asparagine 400 and asparagine 406 are each glycosylated (N-linked (GlcNAc...) asparagine). Intrachain disulfides connect cysteine 521–cysteine 539, cysteine 527–cysteine 562, cysteine 530–cysteine 546, and cysteine 542–cysteine 552. 3 IPT/TIG domains span residues 564–656 (PTIY…FSYV), 658–740 (PVIT…FSYQ), and 743–837 (PIVY…LIYV). Threonine 583 carries O-linked (Man) threonine glycosylation. N-linked (GlcNAc...) asparagine glycosylation is found at asparagine 608 and asparagine 636. O-linked (Man) threonine glycosylation is found at threonine 677 and threonine 762. N-linked (GlcNAc...) asparagine glycans are attached at residues asparagine 786, asparagine 880, and asparagine 931. Residues 934–956 (GLIVGVISISIILLLLLGVFLWL) traverse the membrane as a helical segment. The Cytoplasmic segment spans residues 957–1382 (KKRKQIKDLG…QDNIDGEGDT (426 aa)). Residue serine 967 is modified to Phosphoserine. Threonine 978 bears the Phosphothreonine mark. Phosphoserine is present on residues serine 991, serine 998, and serine 1001. Phosphotyrosine is present on tyrosine 1004. The 268-residue stretch at 1079–1346 (VHFNEVIGRG…RISAIFSTFI (268 aa)) folds into the Protein kinase domain. Residues 1085-1093 (IGRGHFGCV) and lysine 1111 contribute to the ATP site. Aspartate 1205 functions as the Proton acceptor in the catalytic mechanism. The segment at 1213–1382 (LDEKFTVKVA…QDNIDGEGDT (170 aa)) is interaction with RANBP9. Tyrosine 1231 bears the Phosphotyrosine mark. Residues tyrosine 1235 and tyrosine 1236 each carry the phosphotyrosine; by autocatalysis modification. Phosphothreonine is present on threonine 1290. Positions 1321-1360 (WHPKAELRPSFSELVSRISAIFSTFIGEHYVHVNATYVNV) are interaction with MUC20. Tyrosine 1350 and tyrosine 1357 each carry phosphotyrosine; by autocatalysis. Phosphotyrosine is present on tyrosine 1366.

This sequence belongs to the protein kinase superfamily. Tyr protein kinase family. In terms of assembly, heterodimer made of an alpha chain (50 kDa) and a beta chain (145 kDa) which are disulfide linked. Binds PLXNB1. Interacts when phosphorylated with downstream effectors including STAT3, PIK3R1, SRC, PCLG1, GRB2 and GAB1. Interacts with SPSB1, SPSB2 and SPSB4. Interacts with INPP5D/SHIP1. When phosphorylated at Tyr-1357, interacts with INPPL1/SHIP2. Interacts with RANBP9 and RANBP10, as well as SPSB1, SPSB2, SPSB3 and SPSB4. SPSB1 binding occurs in the presence and in the absence of HGF, however HGF treatment has a positive effect on this interaction. Interacts with MUC20; prevents interaction with GRB2 and suppresses hepatocyte growth factor-induced cell proliferation. Interacts with GRB10. Interacts with PTPN1 and PTPN2. Interacts with HSP90AA1 and HSP90AB1; the interaction suppresses MET kinase activity. Interacts with tensin TNS3. Interacts (when phosphorylated) with tensin TNS4 (via SH2 domain); the interaction increases MET protein stability by inhibiting MET endocytosis and subsequent lysosomal degradation. In terms of processing, autophosphorylated in response to ligand binding on Tyr-1235 and Tyr-1236 in the kinase domain leading to further phosphorylation of Tyr-1350 and Tyr-1357 in the C-terminal multifunctional docking site. Dephosphorylated by PTPRJ at Tyr-1350 and Tyr-1366. Dephosphorylated by PTPN1 and PTPN2. Ubiquitinated. Ubiquitination by CBL regulates the receptor stability and activity through proteasomal degradation. Post-translationally, O-mannosylation of IPT/TIG domains by TMEM260 is required for protein maturation. O-mannosylated residues are composed of single mannose glycans that are not elongated or modified.

The protein resides in the membrane. The enzyme catalyses L-tyrosyl-[protein] + ATP = O-phospho-L-tyrosyl-[protein] + ADP + H(+). In its inactive state, the C-terminal tail interacts with the catalytic domain and inhibits the kinase activity. Upon ligand binding, the C-terminal tail is displaced and becomes phosphorylated, thus increasing the kinase activity. Its function is as follows. Receptor tyrosine kinase that transduces signals from the extracellular matrix into the cytoplasm by binding to hepatocyte growth factor/HGF ligand. Regulates many physiological processes including proliferation, scattering, morphogenesis and survival. Ligand binding at the cell surface induces autophosphorylation of MET on its intracellular domain that provides docking sites for downstream signaling molecules. Following activation by ligand, interacts with the PI3-kinase subunit PIK3R1, PLCG1, SRC, GRB2, STAT3 or the adapter GAB1. Recruitment of these downstream effectors by MET leads to the activation of several signaling cascades including the RAS-ERK, PI3 kinase-AKT, or PLCgamma-PKC. The RAS-ERK activation is associated with the morphogenetic effects while PI3K/AKT coordinates prosurvival effects. During embryonic development, MET signaling plays a role in gastrulation, development and migration of muscles and neuronal precursors, angiogenesis and kidney formation. In adults, participates in wound healing as well as organ regeneration and tissue remodeling. Also promotes differentiation and proliferation of hematopoietic cells. This Felis catus (Cat) protein is Hepatocyte growth factor receptor (MET).